Consider the following 344-residue polypeptide: Phenylalanine--tRNA ligase alpha subunit (344 aa).

Residue glutamate 256 coordinates Mg(2+).

This sequence belongs to the class-II aminoacyl-tRNA synthetase family. Phe-tRNA synthetase alpha subunit type 1 subfamily. As to quaternary structure, tetramer of two alpha and two beta subunits. Requires Mg(2+) as cofactor.

The protein localises to the cytoplasm. It carries out the reaction tRNA(Phe) + L-phenylalanine + ATP = L-phenylalanyl-tRNA(Phe) + AMP + diphosphate + H(+). The polypeptide is Phenylalanine--tRNA ligase alpha subunit (Shouchella clausii (strain KSM-K16) (Alkalihalobacillus clausii)).